The chain runs to 185 residues: Lactoylglutathione lyase (185 aa).

The tract at residues 1-21 (MAAEPKESPSNNPGLHTTPDE) is disordered. The 148-residue stretch at 27–174 (IMQQTMFRIK…DGYWIEIFDR (148 aa)) folds into the VOC domain. Glutamine 30 and arginine 34 together coordinate substrate. Glutamine 30 provides a ligand contact to Zn(2+). A Zn(2+)-binding site is contributed by glutamate 96. Substrate-binding positions include asparagine 100, arginine 120, histidine 124, and 154-155 (KM). Histidine 124 contributes to the Zn(2+) binding site. Residue glutamate 170 participates in Zn(2+) binding. Glutamate 170 serves as the catalytic Proton donor/acceptor.

The protein belongs to the glyoxalase I family. In terms of assembly, homodimer. It depends on Zn(2+) as a cofactor.

The catalysed reaction is (R)-S-lactoylglutathione = methylglyoxal + glutathione. Its pathway is secondary metabolite metabolism; methylglyoxal degradation; (R)-lactate from methylglyoxal: step 1/2. Its function is as follows. Catalyzes the conversion of hemimercaptal, formed from methylglyoxal and glutathione, to S-lactoylglutathione. Active toward the hemithioacetal adducts formed by reacting methylglyoxal or phenylglyoxal with glutathione, homoglutathione or gamma-glutamylcysteine, showing no preference for homoglutathione adducts over glutathione adducts. The sequence is that of Lactoylglutathione lyase (GLXI) from Glycine max (Soybean).